Consider the following 493-residue polypeptide: MTLSNQLSDLRLFRQYAYIDGKWTHGDAGREEAVFDPATGEAIGHIPVLEVEQIRGAVDAAEAAFVQWRALRADERCERLLAWYDLLQANREDLATIMTLEQGKPLPDARGEVEYGASFVRWFAEEGKRTFGDTIPSHIPNAALGTIKEPVGIAALITPWNFPLAMITRKAAAAMAAGCPVIVKPAHETPYSALALAELAERAGIPAGVFNVVLGEAAEVSKLLCDDERIKALSFTGSTRVGRLLLEQSANTVKRVSLELGGNAPFIVGPDMDPREAAFAAVAAKFQTAGQDCLAANRILVHESIHDAFVEQFAERMAALTVGNGLESEVDLGPLIHGQAVEKASAIVDDALSRGATLVAGDQREAPGPNFFMPTLLTGVTPEMQVWREENFAPVAGITSYRDDDEVIEMANDTEYGLAAYVYTHDIRRIWKLLRALEYGMVSVNSVKMTGPPVPFGGVKQSGLGREGGVTGIDEYLETKYYCLGALGSVSGS.

Residues 160–161 (WN), 184–187 (KPAH), and 237–238 (GS) each bind NADP(+). Glu-259 (proton acceptor) is an active-site residue. NADP(+) is bound at residue Leu-260. Cys-293 (nucleophile) is an active-site residue. NADP(+) is bound at residue Glu-390.

The protein belongs to the aldehyde dehydrogenase family.

The protein localises to the cytoplasm. It catalyses the reaction L-aspartate 4-semialdehyde + NAD(+) + H2O = L-aspartate + NADH + 2 H(+). Its function is as follows. Involved in the degradation of ectoine, which allows H.elongata to utilize ectoine as both a carbon and a nitrogen source for growth. Probably catalyzes the NAD(+)-dependent oxidation of L-aspartate-semialdehyde to L-aspartate. This Halomonas elongata (strain ATCC 33173 / DSM 2581 / NBRC 15536 / NCIMB 2198 / 1H9) protein is Aspartate-semialdehyde dehydrogenase (Non-phosphorylating).